The following is a 63-amino-acid chain: Large ribosomal subunit protein uL29 (63 aa).

Belongs to the universal ribosomal protein uL29 family.

The chain is Large ribosomal subunit protein uL29 from Bacillus cereus (strain ATCC 14579 / DSM 31 / CCUG 7414 / JCM 2152 / NBRC 15305 / NCIMB 9373 / NCTC 2599 / NRRL B-3711).